A 336-amino-acid polypeptide reads, in one-letter code: Homeobox-leucine zipper protein HAT14 (336 aa).

Disordered regions lie at residues 53–141 (RSLS…PDSV) and 160–194 (SNKRDIDDEVERSASRASNEDNDDENGSTRKKLRL). Over residues 64–81 (EDEKKKPAPRAKKSDEFR) the composition is skewed to basic and acidic residues. The segment covering 120 to 129 (VEEEEEEEEA) has biased composition (acidic residues). The segment covering 130-141 (VPSMSVSPPDSV) has biased composition (low complexity). Residues 160 to 173 (SNKRDIDDEVERSA) show a composition bias toward basic and acidic residues. A DNA-binding region (homeobox) is located at residues 187–246 (STRKKLRLSKDQSAFLEDSFKEHSTLNPKQKIALAKQLNLRPRQVEVWFQNRRARTKLKQ). The segment at 254–275 (LKRCCESLTEENRRLQKEVKEL) is leucine-zipper.

It belongs to the HD-ZIP homeobox family. Class II subfamily.

The protein resides in the nucleus. Its function is as follows. Probable transcription factor. The polypeptide is Homeobox-leucine zipper protein HAT14 (HAT14) (Arabidopsis thaliana (Mouse-ear cress)).